Here is a 318-residue protein sequence, read N- to C-terminus: Replication factor C small subunit (318 aa).

43 to 50 (GSVGTGKT) is a binding site for ATP.

The protein belongs to the activator 1 small subunits family. RfcS subfamily. Heteromultimer composed of small subunits (RfcS) and large subunits (RfcL).

Functionally, part of the RFC clamp loader complex which loads the PCNA sliding clamp onto DNA. In Thermoplasma acidophilum (strain ATCC 25905 / DSM 1728 / JCM 9062 / NBRC 15155 / AMRC-C165), this protein is Replication factor C small subunit.